An 882-amino-acid chain; its full sequence is Putative HTH-type transcriptional regulator Rv0890c (882 aa).

Residues 814–879 (PARGWGSLTP…QLVDEAARRG (66 aa)) enclose the HTH luxR-type domain. Residues 838-857 (NKDIAKRLFVSPRTVQTHLT) constitute a DNA-binding region (H-T-H motif).

The polypeptide is Putative HTH-type transcriptional regulator Rv0890c (Mycobacterium tuberculosis (strain ATCC 25618 / H37Rv)).